A 993-amino-acid chain; its full sequence is Type II inositol 1,4,5-trisphosphate 5-phosphatase (993 aa).

A PH domain is found at 22–148; sequence QGVLCKGDSR…PEFEWLSRHT (127 aa). Basic and acidic residues-rich tracts occupy residues 149-163 and 294-303; these read CAEPDAESPKPREWN and SKSDMSEKVR. Disordered stretches follow at residues 149 to 191 and 236 to 304; these read CAEP…GLED and EALE…KVRS. The segment at 342–668 is 5-phosphatase; it reads IQNFRFFVGT…LDKMENANIP (327 aa). Mg(2+)-binding residues include Asn-355 and Glu-383. Substrate is bound by residues Glu-383, 459 to 460, 582 to 583, and 596 to 598; these read NK, YK, and KCR. The segment at 669–782 is ASH; that stretch reads SVTLSKREFC…LSVSGNYLPS (114 aa). The 173-residue stretch at 821–993 folds into the Rho-GAP domain; it reads SQLENPMEIP…FIHQFLCGPL (173 aa). Position 990 is a cysteine methyl ester (Cys-990). A lipid anchor (S-farnesyl cysteine) is attached at Cys-990. Positions 991 to 993 are cleaved as a propeptide — removed in mature form; sequence GPL.

Belongs to the inositol 1,4,5-trisphosphate 5-phosphatase type II family. As to quaternary structure, interacts with APPL1, PHETA1 and PHETA2. Interacts with several Rab GTPases, at least RAB1A, RAB2A, RAB5A, RAB6A, RAB8A, RAB9A and RAB33B; these interactions may play a dual role in targeting INPP5B to the specific membranes and stimulating its phosphatase activity. Interacts preferentially with non-phosphorylated RAB8A; phosphorylation of RAB8A on 'Thr-72' disrupts this interaction. Interacts with INPP5F. Post-translationally, isoprenylation at Cys-990 may be required for localization at the membrane. May be proteolytically cleaved after Lys-320 as inferred from N-terminal protein sequence of the 75 kda form. Detected in kidney, liver, brain, lung and testis (at protein level). Detected in kidney and liver, and at lower levels in brain, lung and testis.

Its subcellular location is the cytoplasm. The protein resides in the cytosol. It localises to the endoplasmic reticulum-Golgi intermediate compartment. It is found in the early endosome membrane. The protein localises to the membrane. Its subcellular location is the cytoplasmic vesicle. The protein resides in the phagosome membrane. It carries out the reaction a 1,2-diacyl-sn-glycero-3-phospho-(1D-myo-inositol-4,5-bisphosphate) + H2O = a 1,2-diacyl-sn-glycero-3-phospho-(1D-myo-inositol 4-phosphate) + phosphate. Hydrolyzes phosphatidylinositol 4,5-bisphosphate (PtIns(4,5)P2) and the signaling molecule phosphatidylinositol 1,4,5-trisphosphate (PtIns(1,4,5)P3), and thereby modulates cellular signaling events. The chain is Type II inositol 1,4,5-trisphosphate 5-phosphatase (Inpp5b) from Mus musculus (Mouse).